Here is a 592-residue protein sequence, read N- to C-terminus: BTB/POZ domain-containing protein At5g03250 (592 aa).

The BTB domain maps to 28–98 (SDVTIEVGDM…CYGVKIELTA (71 aa)). In terms of domain architecture, NPH3 spans 217-502 (DWWFDDASFL…VQVLFFEQLR (286 aa)). A Phosphotyrosine modification is found at Y443.

It belongs to the NPH3 family.

Its pathway is protein modification; protein ubiquitination. Its function is as follows. May act as a substrate-specific adapter of an E3 ubiquitin-protein ligase complex (CUL3-RBX1-BTB) which mediates the ubiquitination and subsequent proteasomal degradation of target proteins. This is BTB/POZ domain-containing protein At5g03250 from Arabidopsis thaliana (Mouse-ear cress).